Reading from the N-terminus, the 122-residue chain is Large ribosomal subunit protein uL14c (122 aa).

This sequence belongs to the universal ribosomal protein uL14 family. Part of the 50S ribosomal subunit.

The protein localises to the plastid. It is found in the chloroplast. Its function is as follows. Binds to 23S rRNA. In Amborella trichopoda, this protein is Large ribosomal subunit protein uL14c.